The chain runs to 533 residues: Probable lipid II flippase MurJ (533 aa).

14 consecutive transmembrane segments (helical) span residues 11-31, 39-61, 96-116, 135-155, 166-186, 196-216, 253-273, 284-304, 330-350, 360-380, 400-420, 422-442, 452-472, and 493-513; these read LANI…FGLL, AFGV…FLFI, LVSG…GIFI, LQIM…FGTL, ISPL…VWQL, WLLG…LQWL, LSSG…SFIP, FVAL…FLPV, LTMF…VQVI, AAAE…FYLG, VSLF…KPFG, VGIV…FIWM, LGGW…ASVA, and ILEV…GVAL.

The protein belongs to the MurJ/MviN family.

Its subcellular location is the cell inner membrane. It participates in cell wall biogenesis; peptidoglycan biosynthesis. Functionally, involved in peptidoglycan biosynthesis. Transports lipid-linked peptidoglycan precursors from the inner to the outer leaflet of the cytoplasmic membrane. The sequence is that of Probable lipid II flippase MurJ from Synechocystis sp. (strain ATCC 27184 / PCC 6803 / Kazusa).